The sequence spans 357 residues: Anthranilate phosphoribosyltransferase (357 aa).

Residues Gly94, 97 to 98 (GD), Thr102, 104 to 107 (NLST), 122 to 130 (KHGNRAASS), and Gly134 contribute to the 5-phospho-alpha-D-ribose 1-diphosphate site. Gly94 contacts anthranilate. Mg(2+) is bound at residue Ser106. Position 125 (Asn125) interacts with anthranilate. Arg180 is an anthranilate binding site. The Mg(2+) site is built by Asp238 and Glu239.

This sequence belongs to the anthranilate phosphoribosyltransferase family. Homodimer. Mg(2+) serves as cofactor.

The enzyme catalyses N-(5-phospho-beta-D-ribosyl)anthranilate + diphosphate = 5-phospho-alpha-D-ribose 1-diphosphate + anthranilate. It functions in the pathway amino-acid biosynthesis; L-tryptophan biosynthesis; L-tryptophan from chorismate: step 2/5. Its function is as follows. Catalyzes the transfer of the phosphoribosyl group of 5-phosphorylribose-1-pyrophosphate (PRPP) to anthranilate to yield N-(5'-phosphoribosyl)-anthranilate (PRA). The protein is Anthranilate phosphoribosyltransferase of Mycobacterium sp. (strain KMS).